A 161-amino-acid polypeptide reads, in one-letter code: MKLEIEIEHWPDGEWESITGGAAKATRDVEPALAHARLETSVLFTSDEQVHVLNREWRERDKPTNVLSFPMLDRDRLRALEPEGPPEMLGDIALAYETCAREAEEKGISLEAHATHLIVHGLLHLAGHDHVDSDAQAEEMEALEIAALAKLGIADPYGDRT.

3 residues coordinate Zn(2+): His-120, His-124, and His-130.

Belongs to the endoribonuclease YbeY family. The cofactor is Zn(2+).

It localises to the cytoplasm. Its function is as follows. Single strand-specific metallo-endoribonuclease involved in late-stage 70S ribosome quality control and in maturation of the 3' terminus of the 16S rRNA. The sequence is that of Endoribonuclease YbeY from Erythrobacter litoralis (strain HTCC2594).